Reading from the N-terminus, the 213-residue chain is 3-demethoxyubiquinol 3-hydroxylase (213 aa).

Positions 62, 92, 95, 144, 176, and 179 each coordinate Fe cation.

It belongs to the COQ7 family. The cofactor is Fe cation.

It localises to the cell membrane. It catalyses the reaction a 5-methoxy-2-methyl-3-(all-trans-polyprenyl)benzene-1,4-diol + AH2 + O2 = a 3-demethylubiquinol + A + H2O. It functions in the pathway cofactor biosynthesis; ubiquinone biosynthesis. In terms of biological role, catalyzes the hydroxylation of 2-nonaprenyl-3-methyl-6-methoxy-1,4-benzoquinol during ubiquinone biosynthesis. This is 3-demethoxyubiquinol 3-hydroxylase from Legionella pneumophila (strain Corby).